The chain runs to 455 residues: Bifunctional protein GlmU (455 aa).

Residues Met1–Lys225 are pyrophosphorylase. UDP-N-acetyl-alpha-D-glucosamine-binding positions include Leu6–Gly9, Lys20, Gln71, Gly76–Thr77, Tyr98–Asp100, Gly135, Glu150, Asn165, and Asn223. Position 100 (Asp100) interacts with Mg(2+). Asn223 is a binding site for Mg(2+). A linker region spans residues Ala226–Asp246. The tract at residues Gly247 to Glu455 is N-acetyltransferase. UDP-N-acetyl-alpha-D-glucosamine is bound by residues Arg329 and Lys347. The active-site Proton acceptor is the His359. UDP-N-acetyl-alpha-D-glucosamine contacts are provided by Tyr362 and Asn373. Acetyl-CoA-binding positions include Ala376, Asn382–Tyr383, Ser401, Ala419, and Arg436.

In the N-terminal section; belongs to the N-acetylglucosamine-1-phosphate uridyltransferase family. It in the C-terminal section; belongs to the transferase hexapeptide repeat family. In terms of assembly, homotrimer. Mg(2+) serves as cofactor.

The protein resides in the cytoplasm. It carries out the reaction alpha-D-glucosamine 1-phosphate + acetyl-CoA = N-acetyl-alpha-D-glucosamine 1-phosphate + CoA + H(+). The enzyme catalyses N-acetyl-alpha-D-glucosamine 1-phosphate + UTP + H(+) = UDP-N-acetyl-alpha-D-glucosamine + diphosphate. The protein operates within nucleotide-sugar biosynthesis; UDP-N-acetyl-alpha-D-glucosamine biosynthesis; N-acetyl-alpha-D-glucosamine 1-phosphate from alpha-D-glucosamine 6-phosphate (route II): step 2/2. Its pathway is nucleotide-sugar biosynthesis; UDP-N-acetyl-alpha-D-glucosamine biosynthesis; UDP-N-acetyl-alpha-D-glucosamine from N-acetyl-alpha-D-glucosamine 1-phosphate: step 1/1. It participates in bacterial outer membrane biogenesis; LPS lipid A biosynthesis. In terms of biological role, catalyzes the last two sequential reactions in the de novo biosynthetic pathway for UDP-N-acetylglucosamine (UDP-GlcNAc). The C-terminal domain catalyzes the transfer of acetyl group from acetyl coenzyme A to glucosamine-1-phosphate (GlcN-1-P) to produce N-acetylglucosamine-1-phosphate (GlcNAc-1-P), which is converted into UDP-GlcNAc by the transfer of uridine 5-monophosphate (from uridine 5-triphosphate), a reaction catalyzed by the N-terminal domain. In Aromatoleum aromaticum (strain DSM 19018 / LMG 30748 / EbN1) (Azoarcus sp. (strain EbN1)), this protein is Bifunctional protein GlmU.